The primary structure comprises 185 residues: UPF0397 protein CPR_1556 (185 aa).

Transmembrane regions (helical) follow at residues 11-31 (IVAI…GSLP), 44-64 (AFLS…IGFI), 71-91 (IVFF…VGLI), 111-131 (IFMF…LVAP), and 149-169 (GVIG…VLIS).

The protein belongs to the UPF0397 family.

The protein localises to the cell membrane. In Clostridium perfringens (strain SM101 / Type A), this protein is UPF0397 protein CPR_1556.